The sequence spans 882 residues: Bifunctional heparan sulfate N-deacetylase/N-sulfotransferase 1 (882 aa).

Residues M1 to Q17 are Cytoplasmic-facing. The sufficient for localization to Golgi membrane stretch occupies residues M1–F169. Residues A18–Y39 traverse the membrane as a helical; Signal-anchor for type II membrane protein segment. Positions G40–E598 are heparan sulfate N-deacetylase 1. Residues G40 to R882 are Lumenal-facing. 3 N-linked (GlcNAc...) asparagine glycosylation sites follow: N231, N351, and N401. The tract at residues K599–R882 is heparan sulfate N-sulfotransferase 1. K614 acts as the For sulfotransferase activity in catalysis. Residue K614 to T618 participates in adenosine 3',5'-bisphosphate binding. A glycan (N-linked (GlcNAc...) asparagine) is linked at N667. Positions 712 and 817 each coordinate adenosine 3',5'-bisphosphate. A disulfide bridge connects residues C818 and C828. Position 833–837 (K833–Y837) interacts with adenosine 3',5'-bisphosphate.

It belongs to the sulfotransferase 1 family. NDST subfamily. Monomer. In terms of assembly, interacts with heparan sulfate co-polymerase subunits EXT1 and EXT2. Interacts with NDST1 isoform 3. As to quaternary structure, interacts with heparan sulfate co-polymerase subunits EXT1 and EXT2. Interacts with NDST1 isoform 1. In terms of tissue distribution, widely expressed. Expression is most abundant in heart, liver and pancreas.

It localises to the golgi apparatus. The protein localises to the trans-Golgi network membrane. The protein resides in the cis-Golgi network membrane. The enzyme catalyses N-acetyl-alpha-D-glucosaminyl-[heparan sulfate](n) + H2O = alpha-D-glucosaminyl-[heparan sulfate](n) + acetate. It carries out the reaction alpha-D-glucosaminyl-[heparan sulfate](n) + 3'-phosphoadenylyl sulfate = N-sulfo-alpha-D-glucosaminyl-[heparan sulfate](n) + adenosine 3',5'-bisphosphate + 2 H(+). It participates in glycan metabolism; heparan sulfate biosynthesis. It functions in the pathway glycan metabolism; heparin biosynthesis. In terms of biological role, essential bifunctional enzyme that catalyzes both the N-deacetylation and the N-sulfation of glucosamine (GlcNAc) of the glycosaminoglycan in heparan sulfate. Modifies the GlcNAc-GlcA disaccharide repeating sugar backbone to make N-sulfated heparosan, a prerequisite substrate for later modifications in heparin biosynthesis. Plays a role in determining the extent and pattern of sulfation of heparan sulfate. Participates in biosynthesis of heparan sulfate that can ultimately serve as L-selectin ligands, thereby playing a role in inflammatory response. Required for the exosomal release of SDCBP, CD63 and syndecan. Its function is as follows. Lacks both N-deacetylase and N-sulfotransferase activities. Acts as a dominant negative on isoform 1, likely by changing the composition of enzyme complexes responsible for elongation and modification of heparan sulfates. The sequence is that of Bifunctional heparan sulfate N-deacetylase/N-sulfotransferase 1 from Homo sapiens (Human).